We begin with the raw amino-acid sequence, 138 residues long: Large ribosomal subunit protein uL16 (138 aa).

A compositionally biased stretch (basic residues) spans 1 to 13 (MLQPARRKFRKEQ). The tract at residues 1–22 (MLQPARRKFRKEQKGRNTGLAT) is disordered.

This sequence belongs to the universal ribosomal protein uL16 family. In terms of assembly, part of the 50S ribosomal subunit.

Its function is as follows. Binds 23S rRNA and is also seen to make contacts with the A and possibly P site tRNAs. In Thiobacillus denitrificans (strain ATCC 25259 / T1), this protein is Large ribosomal subunit protein uL16.